The sequence spans 59 residues: Large ribosomal subunit protein bL32 (59 aa).

The tract at residues 1–59 (MAVQQNRKSRSRRGMRRSHDALSSAALSIDPTTGEKHRRHHVTPDGFYRGKKVVEVSQD) is disordered. Residues 7–16 (RKSRSRRGMR) are compositionally biased toward basic residues.

It belongs to the bacterial ribosomal protein bL32 family.

This is Large ribosomal subunit protein bL32 from Hahella chejuensis (strain KCTC 2396).